Reading from the N-terminus, the 93-residue chain is UPF0473 protein YrzB (93 aa).

The protein belongs to the UPF0473 family.

The chain is UPF0473 protein YrzB (yrzB) from Bacillus subtilis (strain 168).